The primary structure comprises 1215 residues: DNA-directed RNA polymerase subunit beta' (1215 aa).

Zn(2+) is bound by residues C60, C62, C75, and C78. Positions 450, 452, and 454 each coordinate Mg(2+). Zn(2+) is bound by residues C819, C893, C900, and C903.

It belongs to the RNA polymerase beta' chain family. The RNAP catalytic core consists of 2 alpha, 1 beta, 1 beta' and 1 omega subunit. When a sigma factor is associated with the core the holoenzyme is formed, which can initiate transcription. Mg(2+) is required as a cofactor. Zn(2+) serves as cofactor.

The enzyme catalyses RNA(n) + a ribonucleoside 5'-triphosphate = RNA(n+1) + diphosphate. Its function is as follows. DNA-dependent RNA polymerase catalyzes the transcription of DNA into RNA using the four ribonucleoside triphosphates as substrates. The protein is DNA-directed RNA polymerase subunit beta' of Levilactobacillus brevis (strain ATCC 367 / BCRC 12310 / CIP 105137 / JCM 1170 / LMG 11437 / NCIMB 947 / NCTC 947) (Lactobacillus brevis).